The primary structure comprises 173 residues: MAQNNVYLILFLCLMFLSYSQGQVAEEDFPLAEKDLPSAKINCPEGANAYGSYCYYLIEDRLTWGEADLFCQNMNAGHLVSILSQAESNFVASLVKESGTTASNVWTGLHDPKSNRRWHWSSGSLFLFKSWATGAPSTANRGYCVSLTSNTAYKKWKDENCEAQYSFVCKFRA.

The signal sequence occupies residues 1 to 22; the sequence is MAQNNVYLILFLCLMFLSYSQG. One can recognise a C-type lectin domain in the interval 41-171; the sequence is INCPEGANAY…EAQYSFVCKF (131 aa). Disulfide bonds link C43/C54, C71/C169, and C144/C161.

In terms of tissue distribution, expressed only in regenerating islets and normal exocrine pancreas, but not in normal pancreatic islets. Expressed strongly in pancreas, weakly in liver, but not at all in gall bladder.

The protein resides in the secreted. Functionally, might act as an inhibitor of spontaneous calcium carbonate precipitation. The polypeptide is Lithostathine-2 (Reg2) (Mus musculus (Mouse)).